Here is a 109-residue protein sequence, read N- to C-terminus: Flagellar hook-basal body complex protein FliE (109 aa).

Belongs to the FliE family.

Its subcellular location is the bacterial flagellum basal body. The polypeptide is Flagellar hook-basal body complex protein FliE (Nitrosomonas eutropha (strain DSM 101675 / C91 / Nm57)).